The chain runs to 277 residues: Nickel import ATP-binding protein NikE (277 aa).

The region spanning 14-253 (YRTVSLVGRS…EHPASRALQR (240 aa)) is the ABC transporter domain. 46 to 53 (GRSGSGKS) contacts ATP.

This sequence belongs to the ABC transporter superfamily. Nickel importer (TC 3.A.1.5.3) family. In terms of assembly, the complex is composed of two ATP-binding proteins (NikD and NikE), two transmembrane proteins (NikB and NikC) and a solute-binding protein (NikA).

Its subcellular location is the cell inner membrane. The catalysed reaction is Ni(2+)(out) + ATP + H2O = Ni(2+)(in) + ADP + phosphate + H(+). Functionally, part of the ABC transporter complex NikABCDE involved in nickel import. Responsible for energy coupling to the transport system. In Rhodospirillum rubrum (strain ATCC 11170 / ATH 1.1.1 / DSM 467 / LMG 4362 / NCIMB 8255 / S1), this protein is Nickel import ATP-binding protein NikE.